Reading from the N-terminus, the 957-residue chain is MTQTLSQLENSGAFIERHIGPDAAQQQEMLNAVGAQSLNALTGQIVPKDIQLATPPQVGAPATEYAALAELKAIASRNKRFTSYIGMGYTAVQLPPVILRNMLENPGWYTAYTPYQPEVSQGRLEALLNFQQVTLDLTGLDMASASLLDEATAAAEAMAMAKRVSKLKNANRFFVASDVHPQTLDVVRTRAETFGFEVIVDDAQKVLDHQDVFGVLLQQVGTTGEIHDYTALISELKSRKIVVSVAADIMALVLLTAPGKQGADIVFGSAQRFGVPMGYGGPHAAFFAAKDEYKRSMPGRIIGVSKDAAGNTALRMAMQTREQHIRREKANSNICTSQVLLTNIASLYAVYHGPVGLKRIANRIHRLTDILAAGLQQKGLKLRHAHYFDTLCVEVVDKAGVLARAEAAEINLRSDILNAVGITLDETTTRENVMQLFSVLLGDNHGLDIDTLDKDVAHDSRSIQAAMLRDDEILTHPVFNRYHSETEMMRYMHSLERKDLALNQAMIPLGSCTMKLNAAAEMIPITWPEFAELHPFCPPEQAEGYQQMIAQLADWLVKLTGYDAVCMQPNSGAQGEYAGLLAIRHYHESRNEGHRDICLIPASAHGTNPASAHMAGMQVVVVACDKNGNIDLTDLRAKAEQAGDNLSCIMVTYPSTHGVYEETIREVCEVVHQFGGQVYLDGANMNAQVGITSPGFIGADVSHLNLHKTFCIPHGGGGPGMGPIGVKAHLAPFVPGHSVVQIEGMLTRQGAVSAAPFGSASILPISWMYIRMMGAEGLKKASQVAILNANYIASRLQDAFPVLYTGRDGRVAHECILDIRPLKEETGISELDIAKRLIDYGFHAPTMSFPVAGTLMVEPTESESKVELDRFIDAMLAIRAEIDQVKAGVWPLEDNPLVNAPHIQSELVAEWAHPYSREVAVFPAGVADKYWPTVKRLDDVYGDRNLFCSCVPISEYQ.

Lysine 708 bears the N6-(pyridoxal phosphate)lysine mark.

Belongs to the GcvP family. As to quaternary structure, the glycine cleavage system is composed of four proteins: P, T, L and H. It depends on pyridoxal 5'-phosphate as a cofactor.

The enzyme catalyses N(6)-[(R)-lipoyl]-L-lysyl-[glycine-cleavage complex H protein] + glycine + H(+) = N(6)-[(R)-S(8)-aminomethyldihydrolipoyl]-L-lysyl-[glycine-cleavage complex H protein] + CO2. Functionally, the glycine cleavage system catalyzes the degradation of glycine. The P protein binds the alpha-amino group of glycine through its pyridoxal phosphate cofactor; CO(2) is released and the remaining methylamine moiety is then transferred to the lipoamide cofactor of the H protein. The chain is Glycine dehydrogenase (decarboxylating) from Escherichia coli O1:K1 / APEC.